Consider the following 292-residue polypeptide: Thyroxine 5-deiodinase (292 aa).

Topologically, residues 1–30 (VVGEGRGALGGAATMLRSLLLHSLRLCAQT) are cytoplasmic. The chain crosses the membrane as a helical; Signal-anchor for type II membrane protein span at residues 31-50 (ASCLVLFPRFLGTAFMLWLL). Topologically, residues 51–292 (DFLCIRKHLL…QLHGPQPRRV (242 aa)) are extracellular. U158 is a catalytic residue. Position 158 (U158) is a non-standard amino acid, selenocysteine.

This sequence belongs to the iodothyronine deiodinase family. As to quaternary structure, monomer. Homodimer. May undergo minor heretodimerization with DIO1 and DIO2.

It is found in the cell membrane. Its subcellular location is the endosome membrane. The catalysed reaction is 3,3',5'-triiodo-L-thyronine + iodide + A + H(+) = L-thyroxine + AH2. It catalyses the reaction 3,3'-diiodo-L-thyronine + iodide + A + H(+) = 3,3',5-triiodo-L-thyronine + AH2. It carries out the reaction 3-iodo-L-thyronine + iodide + A + H(+) = 3,5-diiodo-L-thyronine + AH2. The enzyme catalyses L-thyronine + iodide + A + H(+) = 3-iodo-L-thyronine + AH2. The catalysed reaction is 3',5'-diiodo-L-thyronine + iodide + A + H(+) = 3,3',5'-triiodo-L-thyronine + AH2. It catalyses the reaction 3'-iodo-L-thyronine + iodide + A + H(+) = 3,3'-diiodo-L-thyronine + AH2. It carries out the reaction 3,3',5'-triiodothyronamine + iodide + A + H(+) = 3,3',5,5'-tetraiodothyronamine + AH2. The enzyme catalyses 3',5'-diiodothyronamine + iodide + A + H(+) = 3,3',5'-triiodothyronamine + AH2. The catalysed reaction is 3,3'-diiodothyronamine + iodide + A + H(+) = 3,3',5-triiodothyronamine + AH2. It catalyses the reaction 3-iodothyronamine + iodide + A + H(+) = 3,5-diiodothyronamine + AH2. It carries out the reaction 3'-iodothyronamine + iodide + A + H(+) = 3,3'-diiodothyronamine + AH2. The enzyme catalyses thyronamine + iodide + A + H(+) = 3-iodothyronamine + AH2. Its function is as follows. Plays a crucial role in the metabolism of thyroid hormones (TH) and has specific roles in TH activation and inactivation by deiodination.Catalyzes the deiodination of L-thyroxine (T4) to 3,3',5'-triiodothyronine (rT3), 3,5,3'-triiodothyronine (T3) to 3,3'-diiodothyronine (3,3'-T2), 3,5-diiodothyronine (3,5-T2) to 3-monoiodothyronine (3-T1), rT3 to 3',5'-diiodothyronine (3',5'-T2) and 3,3'-T2 to 3'-monoiodothyronine (3'-T1) via inner-ring deiodination (IRD). Catalyzes the deiodination of 3-T1 to L-thyronine (T0) via outer-ring deiodination (ORD). Catalyzes the tyrosyl ring deiodinations of 3,3',5,5'-tetraiodothyronamine, 3,3',5'-triiodothyronamine, 3,5,3'-triiodothyronamine, 3,5-diiodothyronamine, 3,3'-diiodothyronamine and 3-iodothyronamine. This is Thyroxine 5-deiodinase (DIO3) from Ovis aries (Sheep).